Reading from the N-terminus, the 467-residue chain is PYAKMGYWDPDYVVKDTDVLALFRVSPQPGVDPVEASAAVAGESSTATWTVVWTDLLTACDLYRAKAYKVDAVPNTTDQYFAYIAYDIDLFEEGSIANLTASIXGXVFGFKALKALRLEDMRLPVAYLKTFQGPATGVICERERMDKFGRPFLGATVKPKLGLSGKNYGRVVYEGLKGGLDFLKDDENINSQPFMRWKERYLYSMEGVNRAIAAAGETKGHYLNVTAATMEQIYERAEFAKQLGSIIVMVDLVIGYTAIQSMAIWARKNDMILHLHRAGNSTYSRQKIHGMNFRVICKWMRMAGVDHIHAGTVVGKLEGDPVXXXXXXXXXXXXXXXXNLPQGIFFEQDWASLRKVTPVASGGIHCGQMHQLLDYLGVDVVLQFGGGTIGHPDGIQAGATANRVALESMVIARNEGRDFVAEGPQILQDAAKTCGPLQTALDLWKDISFNYTSTDTADLVETPTANV.

Substrate-binding residues include Xaa-106 and Thr-156. Lys-158 functions as the Proton acceptor in the catalytic mechanism. Residue Lys-160 participates in substrate binding. Mg(2+) contacts are provided by Lys-184, Asp-186, and Glu-187. Lys-184 carries the N6-carboxylysine modification. The active-site Proton acceptor is the His-276. Residues Arg-277, His-309, and Ser-361 each coordinate substrate.

The protein belongs to the RuBisCO large chain family. Type I subfamily. In terms of assembly, heterohexadecamer of 8 large chains and 8 small chains. Mg(2+) is required as a cofactor.

It is found in the plastid. The protein resides in the chloroplast. It catalyses the reaction 2 (2R)-3-phosphoglycerate + 2 H(+) = D-ribulose 1,5-bisphosphate + CO2 + H2O. The enzyme catalyses D-ribulose 1,5-bisphosphate + O2 = 2-phosphoglycolate + (2R)-3-phosphoglycerate + 2 H(+). In terms of biological role, ruBisCO catalyzes two reactions: the carboxylation of D-ribulose 1,5-bisphosphate, the primary event in carbon dioxide fixation, as well as the oxidative fragmentation of the pentose substrate in the photorespiration process. Both reactions occur simultaneously and in competition at the same active site. This is Ribulose bisphosphate carboxylase large chain (rbcL) from Chondrus crispus (Carrageen Irish moss).